The following is a 419-amino-acid chain: L-cysteine:1D-myo-inositol 2-amino-2-deoxy-alpha-D-glucopyranoside ligase (419 aa).

Residues 1-20 (MRSWSVPEVPALPGRGPRVH) are disordered. Position 44 (Cys44) interacts with Zn(2+). L-cysteinyl-5'-AMP-binding positions include 44–47 (CGIT), Thr59, and 82–84 (NVT). A 'HIGH' region motif is present at residues 46-56 (ITPYDATHLGH). A 'ERGGDP' region motif is present at residues 191 to 196 (ERGGDP). Trp232 provides a ligand contact to L-cysteinyl-5'-AMP. Position 236 (Cys236) interacts with Zn(2+). L-cysteinyl-5'-AMP is bound at residue 254–256 (GSD). His261 contacts Zn(2+). Val289 contributes to the L-cysteinyl-5'-AMP binding site. A 'KMSKS' region motif is present at residues 295 to 299 (KMSKS).

This sequence belongs to the class-I aminoacyl-tRNA synthetase family. MshC subfamily. As to quaternary structure, monomer. The cofactor is Zn(2+).

It catalyses the reaction 1D-myo-inositol 2-amino-2-deoxy-alpha-D-glucopyranoside + L-cysteine + ATP = 1D-myo-inositol 2-(L-cysteinylamino)-2-deoxy-alpha-D-glucopyranoside + AMP + diphosphate + H(+). In terms of biological role, catalyzes the ATP-dependent condensation of GlcN-Ins and L-cysteine to form L-Cys-GlcN-Ins. This chain is L-cysteine:1D-myo-inositol 2-amino-2-deoxy-alpha-D-glucopyranoside ligase, found in Kineococcus radiotolerans (strain ATCC BAA-149 / DSM 14245 / SRS30216).